The following is a 238-amino-acid chain: Ribonuclease 3 (238 aa).

Positions 8–135 (VAELERRIGY…LIAALYIDGG (128 aa)) constitute an RNase III domain. Glutamate 48 provides a ligand contact to Mg(2+). Residue aspartate 52 is part of the active site. Residues aspartate 121 and glutamate 124 each contribute to the Mg(2+) site. Residue glutamate 124 is part of the active site. A DRBM domain is found at 161-230 (DPKTQLQEWV…AQCMLLKREG (70 aa)).

The protein belongs to the ribonuclease III family. As to quaternary structure, homodimer. Mg(2+) is required as a cofactor.

It localises to the cytoplasm. It carries out the reaction Endonucleolytic cleavage to 5'-phosphomonoester.. Its function is as follows. Digests double-stranded RNA. Involved in the processing of primary rRNA transcript to yield the immediate precursors to the large and small rRNAs (23S and 16S). Processes some mRNAs, and tRNAs when they are encoded in the rRNA operon. Processes pre-crRNA and tracrRNA of type II CRISPR loci if present in the organism. The sequence is that of Ribonuclease 3 from Phenylobacterium zucineum (strain HLK1).